Consider the following 201-residue polypeptide: HTH-type transcriptional regulator Hpr (201 aa).

The HTH marR-type domain maps to 13–157 (AMLFSQRIAQ…MMCIIRNIYG (145 aa)). Residues 63–86 (ISEIAKFGVMHVSTAFNFSKKLEE) constitute a DNA-binding region (H-T-H motif).

As to quaternary structure, homodimer.

Its function is as follows. Negative regulator of protease production and sporulation. This Geobacillus sp. (strain WCH70) protein is HTH-type transcriptional regulator Hpr.